Here is a 463-residue protein sequence, read N- to C-terminus: Asparagine--tRNA ligase (463 aa).

Belongs to the class-II aminoacyl-tRNA synthetase family. In terms of assembly, homodimer.

The protein resides in the cytoplasm. The enzyme catalyses tRNA(Asn) + L-asparagine + ATP = L-asparaginyl-tRNA(Asn) + AMP + diphosphate + H(+). In Bacillus cereus (strain ZK / E33L), this protein is Asparagine--tRNA ligase.